Here is a 180-residue protein sequence, read N- to C-terminus: Vacuolar ATPase assembly protein VMA22 (180 aa).

Residues 16 to 37 (QLLGDLEELEGKRTVLNARVEE) are a coiled coil. Positions 92-101 (EEVGPREAGL) are enriched in basic and acidic residues. The interval 92 to 122 (EEVGPREAGLRRRKGPTKTPEPESSEAPQDP) is disordered. The stretch at 153 to 176 (SLQNRIDWGRSQLRGLQEKLKQLE) forms a coiled coil.

As to quaternary structure, accessory component of the multisubunit proton-transporting vacuolar (V)-ATPase protein pump. Expressed throughout the brain.

It is found in the endosome. The protein resides in the lysosome. The protein localises to the endoplasmic reticulum-Golgi intermediate compartment. It localises to the cytoplasmic vesicle. Its subcellular location is the COPI-coated vesicle. It is found in the endoplasmic reticulum. Its function is as follows. Accessory component of the proton-transporting vacuolar (V)-ATPase protein pump involved in intracellular iron homeostasis. In aerobic conditions, required for intracellular iron homeostasis, thus triggering the activity of Fe(2+) prolyl hydroxylase (PHD) enzymes, and leading to HIF1A hydroxylation and subsequent proteasomal degradation. Necessary for endolysosomal acidification and lysosomal degradation. May be involved in Golgi homeostasis. The sequence is that of Vacuolar ATPase assembly protein VMA22 from Homo sapiens (Human).